Reading from the N-terminus, the 380-residue chain is 3-isopropylmalate dehydratase large subunit (380 aa).

3 residues coordinate [4Fe-4S] cluster: Cys-262, Cys-320, and Cys-323.

Belongs to the aconitase/IPM isomerase family. LeuC type 2 subfamily. As to quaternary structure, heterodimer of LeuC and LeuD. [4Fe-4S] cluster is required as a cofactor.

It catalyses the reaction (2R,3S)-3-isopropylmalate = (2S)-2-isopropylmalate. The protein operates within amino-acid biosynthesis; L-leucine biosynthesis; L-leucine from 3-methyl-2-oxobutanoate: step 2/4. In terms of biological role, catalyzes the isomerization between 2-isopropylmalate and 3-isopropylmalate, via the formation of 2-isopropylmaleate. In Pyrococcus horikoshii (strain ATCC 700860 / DSM 12428 / JCM 9974 / NBRC 100139 / OT-3), this protein is 3-isopropylmalate dehydratase large subunit.